Reading from the N-terminus, the 267-residue chain is 27 kDa primary mesenchyme-specific spicule protein (267 aa).

Residues 1–16 (MKLLAILLVLPALCFG) form the signal peptide. Residues 20–64 (EGPGMGPGMGPGMGPGMGPGMGPGMGPGMGPGMGPGQGQGQGQGQ) are 11 X 4 AA tandem repeats of G-[PQ]-G-[MQ]. Repeat copies occupy residues 21–24 (GPGM), 25–28 (GPGM), 29–32 (GPGM), 33–36 (GPGM), 37–40 (GPGM), 41–44 (GPGM), 45–48 (GPGM), 49–52 (GPGM), 53–56 (GPGQ), 57–60 (GQGQ), and 61–64 (GQGQ). The segment at 44-68 (MGPGMGPGMGPGQGQGQGQGQGQVG) is disordered. The C-type lectin domain occupies 79 to 220 (IGQQCFKMMS…CDEPMYFACS (142 aa)). 2 cysteine pairs are disulfide-bonded: Cys-100/Cys-219 and Cys-197/Cys-211.

As to expression, expressed specifically in the micromere/primary mesenchyme cells (PMC) lineage. Produced uniformly and exclusively by PMCs through the early prism stage and this specificity is further restricted during skeletogenesis to a subpopulation of PMCs associated with the growing tips of the spicules.

It is found in the secreted. Functionally, may play a role in the regulation or execution of skeletal growth. This chain is 27 kDa primary mesenchyme-specific spicule protein (PM27), found in Strongylocentrotus purpuratus (Purple sea urchin).